The following is a 238-amino-acid chain: Splicing regulator RBM11 (238 aa).

The 78-residue stretch at 10-87 folds into the RRM domain; that stretch reads RTVFVGNLEA…RPINVQYRFG (78 aa). Positions 172 to 238 are disordered; it reads ALNHSPGPEA…CRKCKKKKRY (67 aa). Positions 202–237 match the Bipartite nuclear localization signal motif; it reads NKRKRQRPDSDSDSSSEDKRGNEGSQKCRKCKKKKR. Over residues 228–238 the composition is skewed to basic residues; the sequence is KCRKCKKKKRY.

As to quaternary structure, homodimer. Selectively expressed in brain, cerebellum and testis, and to a lower extent in kidney.

Its subcellular location is the nucleus. It localises to the nucleoplasm. The protein resides in the nucleus speckle. Its function is as follows. Tissue-specific splicing factor with potential implication in the regulation of alternative splicing during neuron and germ cell differentiation. Antagonizes SRSF1-mediated BCL-X splicing. May affect the choice of alternative 5' splice sites by binding to specific sequences in exons and antagonizing the SR protein SRSF1. This is Splicing regulator RBM11 (Rbm11) from Mus musculus (Mouse).